Consider the following 356-residue polypeptide: S-adenosylmethionine:tRNA ribosyltransferase-isomerase (356 aa).

This sequence belongs to the QueA family. In terms of assembly, monomer.

The protein localises to the cytoplasm. It catalyses the reaction 7-aminomethyl-7-carbaguanosine(34) in tRNA + S-adenosyl-L-methionine = epoxyqueuosine(34) in tRNA + adenine + L-methionine + 2 H(+). Its pathway is tRNA modification; tRNA-queuosine biosynthesis. Transfers and isomerizes the ribose moiety from AdoMet to the 7-aminomethyl group of 7-deazaguanine (preQ1-tRNA) to give epoxyqueuosine (oQ-tRNA). This chain is S-adenosylmethionine:tRNA ribosyltransferase-isomerase, found in Xanthomonas campestris pv. campestris (strain B100).